The chain runs to 677 residues: Pannexin-2 (677 aa).

The Cytoplasmic segment spans residues 11 to 47; it reads MATALLAGEKLRELILPGAQDDKAGALAALLLQLKLE. Residues 48 to 70 form a helical membrane-spanning segment; it reads LPFDRVVTIGTVLVPILLVTLVF. At 71-123 the chain is on the extracellular side; sequence TKNFAEEPIYCYTPHNFTRDQALYARGYCWTELRDALPGVDASLWPSLFEHKF. N-linked (GlcNAc...) asparagine glycosylation is present at asparagine 86. Residues 124 to 146 traverse the membrane as a helical segment; that stretch reads LPYALLAFAAIMYVPALGWEFLA. Residues 147-226 are Cytoplasmic-facing; it reads STRLTSELNF…RGRSNFLAKL (80 aa). The chain crosses the membrane as a helical span at residues 227–249; sequence YLARHVLILLLSAVPISYLCTYY. Residues 250–292 are Extracellular-facing; sequence ATQKQNEFTCALGASPDGAAGAGPAVRVSCKLPSVQLQRIIAG. The helical transmembrane segment at 293-315 threads the bilayer; sequence VDIVLLCVMNLIILVNLIHLFIF. The Cytoplasmic segment spans residues 316–643; sequence RKSNFIFDKL…AREEEDGGPR (328 aa). 2 disordered regions span residues 393–423 and 454–510; these read ATPTVRDSGVQTVDPSANPAEPDGAAEPPVV and NSKA…KKHA. Residues 492–504 show a composition bias toward pro residues; sequence GPGPAPAPAPPPA. Serine 593 carries the phosphoserine modification.

The protein belongs to the pannexin family. In terms of assembly, homoheptameric. Post-translationally, S-palmitoylated in neural stem and progenitor cells. Cleaved by CASP3 and CASP7 during apoptosis. Cleavage has no effect on it function.

It localises to the cell membrane. It is found in the golgi apparatus membrane. The protein resides in the endoplasmic reticulum membrane. The catalysed reaction is ATP(in) = ATP(out). The enzyme catalyses chloride(in) = chloride(out). It carries out the reaction iodide(out) = iodide(in). It catalyses the reaction Na(+)(in) = Na(+)(out). The catalysed reaction is D-gluconate(in) = D-gluconate(out). Its function is as follows. Ion channel with a slight anion preference. Also able to release ATP. Plays a role in regulating neurogenesis and apoptosis in keratinocytes. In Homo sapiens (Human), this protein is Pannexin-2.